The following is a 98-amino-acid chain: HssA/B-like protein 33 (98 aa).

Disordered regions lie at residues 1–29 and 60–98; these read MTLFSSISSMSSSMTSSRSSFSSFGSGTS and AKSSGGSCGGKGGPHNHGHGNGHGPHGHGGKGSGGSCSC. Positions 60–72 are enriched in gly residues; it reads AKSSGGSCGGKGG. Residues 73–88 are compositionally biased toward basic residues; that stretch reads PHNHGHGNGHGPHGHG. Gly residues predominate over residues 89–98; that stretch reads GKGSGGSCSC.

It belongs to the hssA/B family.

This is HssA/B-like protein 33 (hssl33) from Dictyostelium discoideum (Social amoeba).